The sequence spans 422 residues: Dioxygenase str8 (422 aa).

Zn(2+) contacts are provided by cysteine 73, cysteine 75, cysteine 78, and histidine 119. Histidine 243, aspartate 245, and histidine 382 together coordinate Fe cation.

Belongs to the gamma-BBH/TMLD family. The cofactor is Fe(2+).

The protein operates within mycotoxin biosynthesis. Dioxygenase; part of the gene cluster that mediates the biosynthesis of strobilurin A, an antifungal polyketide that contains a key beta-methoxyacrylate toxophore that targets the complex III of the mitochondrial electron transport chain. Strobilurin biosynthesis begins with construction of benzoyl CoA by step-wise elimination of ammonia from phenylalanine by the phenylalanine ammonia-lyase str11, oxygenation by str8 and retro-Claisen reaction to form benzoic acid, which is activated to its CoA thiolester benzoyl CoA by the dedicated CoA ligase str10. Benzoyl CoA forms the starter unit for the highly reducing polyketide synthase stpks1 that produces the polyketide prestrobilutin A. The FAD-dependent oxygenase str9 then catalyzes the key oxidative rearrangement responsible for the creation of the beta-methoxyacrylate toxophore. Str9 performs epoxidation of the 2,3 olefin of prestrobilutin A, followed by Meinwald rearrangement to furnish the aldehyde intermediate. Rapid enolization of the aldehyde intermediate would give the beta-methoxyacrylate skeleton and methylations catalyzed by str2 and str3 complete the synthesis and lead to the production of strobilurin A. The short-chain dehydrogenase stl2 and the dehydrogenase str4 play a role in the shunt pathway leading to the production of bolineol. The cluster encodes no obvious halogenase gene that could be involved in production of strobilurin B, nor any obvious dimethylallyl-transferase that could be involved in the production of strobilurin G. It is possible that unknown proteins encoded in, or near, the cluster (such as str1 or stl1) may form new classes of halogenases or dimethylally-transferases, or that the responsible genes are located elsewhere on the genome. Similarly, proteins encoded by str5/str6 hydrolases appear to have no chemical role in the biosynthesis of strobilurin A. Finally, no obvious self-resistance gene is found within the cluster. In Strobilurus tenacellus, this protein is Dioxygenase str8.